We begin with the raw amino-acid sequence, 192 residues long: NADH-quinone oxidoreductase subunit C (192 aa).

The segment at 170 to 192 is disordered; it reads LGGIPVEYKGATVPPPDERRQYA.

The protein belongs to the complex I 30 kDa subunit family. NDH-1 is composed of 14 different subunits. Subunits NuoB, C, D, E, F, and G constitute the peripheral sector of the complex.

It is found in the cell membrane. The enzyme catalyses a quinone + NADH + 5 H(+)(in) = a quinol + NAD(+) + 4 H(+)(out). Its function is as follows. NDH-1 shuttles electrons from NADH, via FMN and iron-sulfur (Fe-S) centers, to quinones in the respiratory chain. The immediate electron acceptor for the enzyme in this species is believed to be a menaquinone. Couples the redox reaction to proton translocation (for every two electrons transferred, four hydrogen ions are translocated across the cytoplasmic membrane), and thus conserves the redox energy in a proton gradient. This chain is NADH-quinone oxidoreductase subunit C, found in Acidothermus cellulolyticus (strain ATCC 43068 / DSM 8971 / 11B).